The chain runs to 273 residues: 3-methyl-2-oxobutanoate hydroxymethyltransferase (273 aa).

Residues D53 and D92 each contribute to the Mg(2+) site. 3-methyl-2-oxobutanoate is bound by residues 53-54 (DS), D92, and K120. E122 provides a ligand contact to Mg(2+). E189 serves as the catalytic Proton acceptor.

This sequence belongs to the PanB family. In terms of assembly, homodecamer; pentamer of dimers. Mg(2+) is required as a cofactor.

It is found in the cytoplasm. It catalyses the reaction 3-methyl-2-oxobutanoate + (6R)-5,10-methylene-5,6,7,8-tetrahydrofolate + H2O = 2-dehydropantoate + (6S)-5,6,7,8-tetrahydrofolate. It functions in the pathway cofactor biosynthesis; (R)-pantothenate biosynthesis; (R)-pantoate from 3-methyl-2-oxobutanoate: step 1/2. Catalyzes the reversible reaction in which hydroxymethyl group from 5,10-methylenetetrahydrofolate is transferred onto alpha-ketoisovalerate to form ketopantoate. The protein is 3-methyl-2-oxobutanoate hydroxymethyltransferase of Cupriavidus taiwanensis (strain DSM 17343 / BCRC 17206 / CCUG 44338 / CIP 107171 / LMG 19424 / R1) (Ralstonia taiwanensis (strain LMG 19424)).